The primary structure comprises 58 residues: Potassium channel toxin alpha-KTx 1.6 (58 aa).

Positions 1 to 21 (MKISFLLLLAIVICSIGWTEA) are cleaved as a signal peptide. Gln-22 carries the pyrrolidone carboxylic acid modification. Intrachain disulfides connect Cys-28-Cys-49, Cys-34-Cys-54, and Cys-38-Cys-56.

It belongs to the short scorpion toxin superfamily. Potassium channel inhibitor family. Alpha-KTx 01 subfamily. In terms of tissue distribution, expressed by the venom gland.

It localises to the secreted. Potent blocker of both large-conductance calcium-activated potassium channels (KCa1.1/KCNMA1) and voltage-gated potassium channels (Kv1.3/KCNA3 and ERG1/Kv11.1/KCNH2). The chain is Potassium channel toxin alpha-KTx 1.6 from Olivierus martensii (Manchurian scorpion).